Here is a 51-residue protein sequence, read N- to C-terminus: Astexin-1 (51 aa).

The propeptide occupies 1-28; that stretch reads MHTPIISETVQPKTAGLIVLGKASAETR. The isoaspartyl glycine isopeptide (Gly-Asp) cross-link spans 29–37; that stretch reads GLSQGVEPD.

In terms of processing, this lasso peptide is probably hydrolyzed to a linear form by the isopeptidase AtxE1, in vivo.

In terms of biological role, shows weak antimicrobial activity against its phylogenetic relative Caulobacter crescentus. Does not show activity against other bacteria tested (E.coli, Vibrio sp, Burkhoderia thailandensis, and Salmonella newport). The protein is Astexin-1 of Asticcacaulis excentricus (strain ATCC 15261 / DSM 4724 / KCTC 12464 / NCIMB 9791 / VKM B-1370 / CB 48).